Reading from the N-terminus, the 462-residue chain is Argininosuccinate lyase (462 aa).

It belongs to the lyase 1 family. Argininosuccinate lyase subfamily.

The protein resides in the cytoplasm. It catalyses the reaction 2-(N(omega)-L-arginino)succinate = fumarate + L-arginine. It functions in the pathway amino-acid biosynthesis; L-arginine biosynthesis; L-arginine from L-ornithine and carbamoyl phosphate: step 3/3. The chain is Argininosuccinate lyase from Hydrogenovibrio crunogenus (strain DSM 25203 / XCL-2) (Thiomicrospira crunogena).